The following is a 537-amino-acid chain: Zinc finger protein 835 (537 aa).

The tract at residues 12-109 is disordered; it reads AELEGNWKHE…RERGGGPKKP (98 aa). A compositionally biased stretch (polar residues) spans 63-77; that stretch reads TISSPAATQASVPDD. Residues 89-104 show a composition bias toward basic and acidic residues; the sequence is SPKERHPDSRQRERGG. C2H2-type zinc fingers lie at residues 110–132, 138–160, 166–188, 194–216, 222–244, 250–272, 278–300, 306–328, 334–356, 362–384, 390–412, 418–440, 446–468, and 474–496; these read WKCGDCGKAFSYCSAFILHQRIH, FACPECGKAFSQSVHLTLHQRTH, YACHECGKAFSQGSYLASHWRTH, HRCADCGKAFTRVTHLTQHRRVH, YACAQCAKAFRNRSSLIEHQRIH, YECSACAKAFRFSSALIRHQRIH, YRCGQCAKAFAQIAHLTQHRRVH, YTCQDCGALFSQSASLAEHRRIH, YACGQCAKAFTQVSHLTQHQRTH, YPCHDCGKRFSNRSHLLQHRLVH, YRCLQCGAAFSHVSSLIEHQKIH, YKCGECGKAFSQGSSLALHQRTH, YTCPECGKAFSNRSYLIQHHIVH, and YECSGCGKAFSFSSALIRHQRTH. Positions 497 to 537 are disordered; that stretch reads ADSSGRLCPAPTPDSTPGLSQGGETCQQGCPGRNPRGPAED. Positions 509–524 are enriched in polar residues; sequence PDSTPGLSQGGETCQQ.

The protein belongs to the krueppel C2H2-type zinc-finger protein family.

The protein localises to the nucleus. May be involved in transcriptional regulation. This chain is Zinc finger protein 835 (ZNF835), found in Homo sapiens (Human).